Here is a 356-residue protein sequence, read N- to C-terminus: DNA polymerase IV (356 aa).

Residues 6–187 (IIHIDMDYFF…LDIGDFPGVG (182 aa)) enclose the UmuC domain. Positions 10 and 105 each coordinate Mg(2+). The active site involves Glu106.

Belongs to the DNA polymerase type-Y family. In terms of assembly, monomer. The cofactor is Mg(2+).

The protein resides in the cytoplasm. The enzyme catalyses DNA(n) + a 2'-deoxyribonucleoside 5'-triphosphate = DNA(n+1) + diphosphate. Functionally, poorly processive, error-prone DNA polymerase involved in untargeted mutagenesis. Copies undamaged DNA at stalled replication forks, which arise in vivo from mismatched or misaligned primer ends. These misaligned primers can be extended by PolIV. Exhibits no 3'-5' exonuclease (proofreading) activity. May be involved in translesional synthesis, in conjunction with the beta clamp from PolIII. The polypeptide is DNA polymerase IV (Staphylococcus aureus (strain MRSA252)).